A 327-amino-acid chain; its full sequence is Serine/threonine-protein phosphatase PP1-beta catalytic subunit (327 aa).

An N-acetylalanine modification is found at Ala2. The Mn(2+) site is built by Asp63, His65, Asp91, and Asn123. His124 serves as the catalytic Proton donor. Residues His172 and His247 each contribute to the Mn(2+) site. The segment at 305-327 is disordered; sequence QYGGLNSGRPVTPPRTANPPKKR.

Belongs to the PPP phosphatase family. PP-1 subfamily. The cofactor is Mn(2+).

It localises to the cytoplasm. It is found in the nucleus. The catalysed reaction is O-phospho-L-seryl-[protein] + H2O = L-seryl-[protein] + phosphate. It carries out the reaction O-phospho-L-threonyl-[protein] + H2O = L-threonyl-[protein] + phosphate. Its function is as follows. Protein phosphatase that associates with over 200 regulatory proteins to form highly specific holoenzymes which dephosphorylate hundreds of biological targets. Protein phosphatase (PP1) is essential for cell division, it participates in the regulation of glycogen metabolism, muscle contractility and protein synthesis. Involved in regulation of ionic conductances and long-term synaptic plasticity. This chain is Serine/threonine-protein phosphatase PP1-beta catalytic subunit (ppp1cb), found in Xenopus laevis (African clawed frog).